The sequence spans 231 residues: Lipoprotein-releasing system ATP-binding protein LolD (231 aa).

The region spanning 6–230 (LSCKNVSKKY…DGELELVINS (225 aa)) is the ABC transporter domain. 42 to 49 (GLSGSGKT) is a binding site for ATP.

This sequence belongs to the ABC transporter superfamily. Lipoprotein translocase (TC 3.A.1.125) family. As to quaternary structure, the complex is composed of two ATP-binding proteins (LolD) and two transmembrane proteins (LolC and LolE).

It localises to the cell inner membrane. In terms of biological role, part of the ABC transporter complex LolCDE involved in the translocation of mature outer membrane-directed lipoproteins, from the inner membrane to the periplasmic chaperone, LolA. Responsible for the formation of the LolA-lipoprotein complex in an ATP-dependent manner. This Francisella tularensis subsp. holarctica (strain OSU18) protein is Lipoprotein-releasing system ATP-binding protein LolD.